The sequence spans 157 residues: Transcriptional repressor NrdR (157 aa).

A zinc finger lies at 3–34 (CSNCQNKNTKVLDSRPIEEGRAIRRRRECERC). The ATP-cone domain occupies 49–139 (LIVVKKDGVR…VYRQFKDITV (91 aa)).

It belongs to the NrdR family. The cofactor is Zn(2+).

Negatively regulates transcription of bacterial ribonucleotide reductase nrd genes and operons by binding to NrdR-boxes. The chain is Transcriptional repressor NrdR from Oceanobacillus iheyensis (strain DSM 14371 / CIP 107618 / JCM 11309 / KCTC 3954 / HTE831).